The primary structure comprises 246 residues: Pyridoxine 5'-phosphate synthase (246 aa).

Position 9 (N9) interacts with 3-amino-2-oxopropyl phosphate. 11–12 contributes to the 1-deoxy-D-xylulose 5-phosphate binding site; that stretch reads DH. R20 is a binding site for 3-amino-2-oxopropyl phosphate. Catalysis depends on H45, which acts as the Proton acceptor. 1-deoxy-D-xylulose 5-phosphate-binding residues include R47 and H52. E72 acts as the Proton acceptor in catalysis. 1-deoxy-D-xylulose 5-phosphate is bound at residue T102. H193 acts as the Proton donor in catalysis. Residues G194 and 215 to 216 each bind 3-amino-2-oxopropyl phosphate; that span reads GH.

Belongs to the PNP synthase family. Homooctamer; tetramer of dimers.

The protein resides in the cytoplasm. The enzyme catalyses 3-amino-2-oxopropyl phosphate + 1-deoxy-D-xylulose 5-phosphate = pyridoxine 5'-phosphate + phosphate + 2 H2O + H(+). The protein operates within cofactor biosynthesis; pyridoxine 5'-phosphate biosynthesis; pyridoxine 5'-phosphate from D-erythrose 4-phosphate: step 5/5. Its function is as follows. Catalyzes the complicated ring closure reaction between the two acyclic compounds 1-deoxy-D-xylulose-5-phosphate (DXP) and 3-amino-2-oxopropyl phosphate (1-amino-acetone-3-phosphate or AAP) to form pyridoxine 5'-phosphate (PNP) and inorganic phosphate. This chain is Pyridoxine 5'-phosphate synthase, found in Colwellia psychrerythraea (strain 34H / ATCC BAA-681) (Vibrio psychroerythus).